The primary structure comprises 336 residues: Formimidoylglutamase (336 aa).

Residues histidine 129, aspartate 160, histidine 162, aspartate 164, aspartate 257, and aspartate 259 each coordinate Mn(2+).

Belongs to the arginase family. The cofactor is Mn(2+).

It carries out the reaction N-formimidoyl-L-glutamate + H2O = formamide + L-glutamate. Its pathway is amino-acid degradation; L-histidine degradation into L-glutamate; L-glutamate from N-formimidoyl-L-glutamate (hydrolase route): step 1/1. In terms of biological role, catalyzes the conversion of N-formimidoyl-L-glutamate to L-glutamate and formamide. The sequence is that of Formimidoylglutamase from Vibrio vulnificus (strain CMCP6).